Consider the following 260-residue polypeptide: Tropinone reductase 2 (260 aa).

13 to 37 (LVTGGSRGIGYGIVEELANLGASVY) contacts NADP(+). Ser-146 contributes to the substrate binding site. Residue Tyr-159 is the Proton acceptor of the active site.

It belongs to the short-chain dehydrogenases/reductases (SDR) family.

The catalysed reaction is pseudotropine + NADP(+) = tropinone + NADPH + H(+). It participates in alkaloid biosynthesis; tropane alkaloid biosynthesis. In terms of biological role, catalyzes the stereospecific reduction of tropinone to pseudotropine. This Hyoscyamus niger (Black henbane) protein is Tropinone reductase 2 (TR2).